A 94-amino-acid polypeptide reads, in one-letter code: Co-chaperonin GroES (94 aa).

This sequence belongs to the GroES chaperonin family. In terms of assembly, heptamer of 7 subunits arranged in a ring. Interacts with the chaperonin GroEL.

It localises to the cytoplasm. Its function is as follows. Together with the chaperonin GroEL, plays an essential role in assisting protein folding. The GroEL-GroES system forms a nano-cage that allows encapsulation of the non-native substrate proteins and provides a physical environment optimized to promote and accelerate protein folding. GroES binds to the apical surface of the GroEL ring, thereby capping the opening of the GroEL channel. This is Co-chaperonin GroES from Streptococcus pneumoniae (strain Hungary19A-6).